The following is a 185-amino-acid chain: CASP-like protein 5A1 (185 aa).

Topologically, residues 1–45 (MNVSHPAVHPVGVPPALGGHAVPPRMRMRVRMEYLVFQGMPLPGT) are cytoplasmic. A helical membrane pass occupies residues 46–66 (LGGLVLRLGQFCSALIAFSVM). Residues 67–76 (LSVRDFSVTA) are Extracellular-facing. The helical transmembrane segment at 77-97 (FCYLVAATVLQCLWSLAMAVI) threads the bilayer. Residues 98 to 121 (DVYALLVKRSLRNPLLVSIFVVGD) lie on the Cytoplasmic side of the membrane. Residues 122–142 (GVTATLTFAAACASAGVIVLI) form a helical membrane-spanning segment. At 143-160 (GNDIAMCKDNPCANYEAA) the chain is on the extracellular side. The chain crosses the membrane as a helical span at residues 161–181 (IIMAFLSWFMVSISFILTFWL). At 182-185 (LATL) the chain is on the cytoplasmic side.

It belongs to the Casparian strip membrane proteins (CASP) family. Homodimer and heterodimers.

It is found in the cell membrane. This is CASP-like protein 5A1 from Picea sitchensis (Sitka spruce).